The primary structure comprises 483 residues: MGSISPQKPPHAILVPYPAQGHVNPLMQLGKLLHARGFYITFVNTEHNHRRLIRSRGQEFIDGLPDFKFEAIPDGLPYTDRDATQHVPSLSDSTRKHCLAPFIDLIAKLKASPDVPPITCIISDGVMAFAIDAARHFGILEIQFWTTSACGFMAYLHHIELVRRGIVPFKDESFLHDGTLDQPVDFIPGMPNMKLRDMPSFIRVTDVNDIMFDFLGSEAHKSLKADAIILNTFDELEQEVLDAIAARYSKNIYTVGPFILLEKGIPEIKSKAFRSSLWKEDLSCLEWLDKREPDSVVYVNYGCVTTITNEQLNEFAWGLANSKHPFLWIVRPDVVMGESAVLPEEFYEEIKDRGLLVSWVPQDRVLQHPAVGVFLSHCGWNSTIECISGGKPMICWPFFAEQQTNCKYACDVWKTGVELSTNLKREELVSIIKEMMETEIGRERRRRAVEWRKKAEEAISVGGVSYNNFDTFIKEVILQQQTQ.

The active-site Proton acceptor is histidine 22. An an anthocyanidin-binding site is contributed by histidine 22. The active-site Charge relay is the aspartate 124. 8 residues coordinate UDP-alpha-D-glucose: threonine 146, valine 360, glutamine 362, histidine 377, tryptophan 380, asparagine 381, serine 382, and glutamate 385. An an anthocyanidin-binding site is contributed by alanine 400. The UDP-alpha-D-glucose site is built by glutamate 401 and glutamine 402.

It belongs to the UDP-glycosyltransferase family. As to expression, expressed in the cortex, xylem and phloem parenchyma, and in specific cells in the endodermis of the petiole of the first unfolded leaf.

It catalyses the reaction 2-hydroxy-2-methylpropanenitrile + UDP-alpha-D-glucose = linamarin + UDP + H(+). In terms of biological role, UDP-glucosyltransferase catalyzing in planta synthesis of cyanogenic glucosides. Able to glucosylate acetone cyanohydrin and 2-hydroxy-2-methylbutyronitrile, forming linamarin and lotaustralin. Also accepts, to some extent, a wide range of potential acceptor substrates, including simple alcohols, flavonoids, isoflavonoids and other hydroxynitriles such as p-hydroxymandelonitrile, mandelonitrile, (E)-4-hydroxy-2-methylbut-2-enenitrile and (E)- 2-(hydroxymethyl)but-2-enenitrile. This chain is Linamarin synthase 1, found in Manihot esculenta (Cassava).